A 239-amino-acid polypeptide reads, in one-letter code: Pyridoxine 5'-phosphate synthase (239 aa).

Asn7 contacts 3-amino-2-oxopropyl phosphate. 9–10 lines the 1-deoxy-D-xylulose 5-phosphate pocket; sequence DH. 3-amino-2-oxopropyl phosphate is bound at residue Arg18. The active-site Proton acceptor is His43. Positions 45 and 50 each coordinate 1-deoxy-D-xylulose 5-phosphate. Glu70 acts as the Proton acceptor in catalysis. Thr100 contacts 1-deoxy-D-xylulose 5-phosphate. Residue His191 is the Proton donor of the active site. Residues Gly192 and 213–214 each bind 3-amino-2-oxopropyl phosphate; that span reads GH.

It belongs to the PNP synthase family. In terms of assembly, homooctamer; tetramer of dimers.

The protein resides in the cytoplasm. It catalyses the reaction 3-amino-2-oxopropyl phosphate + 1-deoxy-D-xylulose 5-phosphate = pyridoxine 5'-phosphate + phosphate + 2 H2O + H(+). It participates in cofactor biosynthesis; pyridoxine 5'-phosphate biosynthesis; pyridoxine 5'-phosphate from D-erythrose 4-phosphate: step 5/5. In terms of biological role, catalyzes the complicated ring closure reaction between the two acyclic compounds 1-deoxy-D-xylulose-5-phosphate (DXP) and 3-amino-2-oxopropyl phosphate (1-amino-acetone-3-phosphate or AAP) to form pyridoxine 5'-phosphate (PNP) and inorganic phosphate. This Geobacter metallireducens (strain ATCC 53774 / DSM 7210 / GS-15) protein is Pyridoxine 5'-phosphate synthase.